The sequence spans 102 residues: Large ribosomal subunit protein bL21 (102 aa).

The protein belongs to the bacterial ribosomal protein bL21 family. In terms of assembly, part of the 50S ribosomal subunit. Contacts protein L20.

This protein binds to 23S rRNA in the presence of protein L20. The polypeptide is Large ribosomal subunit protein bL21 (Neisseria meningitidis serogroup A / serotype 4A (strain DSM 15465 / Z2491)).